The primary structure comprises 441 residues: Ribulose bisphosphate carboxylase large chain (441 aa).

2 residues coordinate substrate: N89 and T139. Residue K141 is the Proton acceptor of the active site. Position 143 (K143) interacts with substrate. Positions 167, 169, and 170 each coordinate Mg(2+). N6-carboxylysine is present on K167. H260 acts as the Proton acceptor in catalysis. Residues R261, H293, and S345 each coordinate substrate.

It belongs to the RuBisCO large chain family. Type I subfamily. As to quaternary structure, heterohexadecamer of 8 large chains and 8 small chains; disulfide-linked. The disulfide link is formed within the large subunit homodimers. The cofactor is Mg(2+). In terms of processing, the disulfide bond which can form in the large chain dimeric partners within the hexadecamer appears to be associated with oxidative stress and protein turnover.

The protein localises to the plastid. It localises to the chloroplast. It carries out the reaction 2 (2R)-3-phosphoglycerate + 2 H(+) = D-ribulose 1,5-bisphosphate + CO2 + H2O. It catalyses the reaction D-ribulose 1,5-bisphosphate + O2 = 2-phosphoglycolate + (2R)-3-phosphoglycerate + 2 H(+). RuBisCO catalyzes two reactions: the carboxylation of D-ribulose 1,5-bisphosphate, the primary event in carbon dioxide fixation, as well as the oxidative fragmentation of the pentose substrate in the photorespiration process. Both reactions occur simultaneously and in competition at the same active site. This Fouquieria splendens (Ocotillo) protein is Ribulose bisphosphate carboxylase large chain.